A 116-amino-acid chain; its full sequence is MRHRHAGKLLGRSYEHRKALYRNLMIALIEHKKIKTTLAKARAVQPEIEHLISIAREDTPHARRMALSKLASKNAMRKLFTFAPTTYGGRNGGYTRITKLGPRRGDGAEMALIELI.

Belongs to the bacterial ribosomal protein bL17 family. In terms of assembly, part of the 50S ribosomal subunit. Contacts protein L32.

The chain is Large ribosomal subunit protein bL17 from Chloroflexus aggregans (strain MD-66 / DSM 9485).